Consider the following 414-residue polypeptide: Tryptophan synthase beta chain (414 aa).

Residues 1–26 (MVSTFSRKDQNYKNDDLNQPSKEGRF) are compositionally biased toward basic and acidic residues. Residues 1–27 (MVSTFSRKDQNYKNDDLNQPSKEGRFG) form a disordered region. N6-(pyridoxal phosphate)lysine is present on Lys109.

It belongs to the TrpB family. In terms of assembly, tetramer of two alpha and two beta chains. Pyridoxal 5'-phosphate serves as cofactor.

The catalysed reaction is (1S,2R)-1-C-(indol-3-yl)glycerol 3-phosphate + L-serine = D-glyceraldehyde 3-phosphate + L-tryptophan + H2O. It functions in the pathway amino-acid biosynthesis; L-tryptophan biosynthesis; L-tryptophan from chorismate: step 5/5. Its function is as follows. The beta subunit is responsible for the synthesis of L-tryptophan from indole and L-serine. In Prochlorococcus marinus (strain MIT 9301), this protein is Tryptophan synthase beta chain.